Reading from the N-terminus, the 355-residue chain is Protein RecA (355 aa).

Position 73 to 80 (73 to 80 (GPESSGKT)) interacts with ATP.

This sequence belongs to the RecA family.

It localises to the cytoplasm. In terms of biological role, can catalyze the hydrolysis of ATP in the presence of single-stranded DNA, the ATP-dependent uptake of single-stranded DNA by duplex DNA, and the ATP-dependent hybridization of homologous single-stranded DNAs. It interacts with LexA causing its activation and leading to its autocatalytic cleavage. The polypeptide is Protein RecA (Solidesulfovibrio magneticus (strain ATCC 700980 / DSM 13731 / RS-1) (Desulfovibrio magneticus)).